The primary structure comprises 513 residues: Maturase K (513 aa).

This sequence belongs to the intron maturase 2 family. MatK subfamily.

The protein localises to the plastid. It is found in the chloroplast. In terms of biological role, usually encoded in the trnK tRNA gene intron. Probably assists in splicing its own and other chloroplast group II introns. This chain is Maturase K, found in Arundo donax (Giant reed).